Reading from the N-terminus, the 551-residue chain is Steroid transmembrane transporter SLC22A24 (551 aa).

Transmembrane regions (helical) follow at residues 16–36, 146–166, 174–194, 204–222, 235–255, 260–280, 350–370, 378–398, 410–430, 435–455, 469–489, and 496–516; these read FQILHLIFVLICFILVVPHTV, SVAKFIYMTGIFIGHLMGGHL, FIVTCGLLTLAVTETSVAFAP, FLTGISSSCIRTNSALLIL, ALIFSAGGIGQVLLGVLAFGI, HLQLAMSVPVFFLLIPTRWLS, ICLLSFVRCVSLISTVGLLIN, VFLLQCLYGVVCTPANLLGNF, IIFMSVMGISILSITFLTQEM, LVLASLGGAISSASLTSTAVL, LGVIGIFGSAGAALSPLLMIL, and LPWIIYGVLPILSSLVVLLLP. Residues 524-551 form a disordered region; it reads PDSIQDVENKRKSSREVKKDAVAKVTPF. The segment covering 530–545 has biased composition (basic and acidic residues); it reads VENKRKSSREVKKDAV.

Localized to the kidney. Mainly expressed in the late segments of proximal tubules.

Its subcellular location is the cell membrane. It catalyses the reaction estrone 3-sulfate(out) + glutarate(in) = estrone 3-sulfate(in) + glutarate(out). The enzyme catalyses 17beta-estradiol 17-O-(beta-D-glucuronate)(out) + glutarate(in) = 17beta-estradiol 17-O-(beta-D-glucuronate)(in) + glutarate(out). It carries out the reaction dehydroepiandrosterone 3-sulfate(out) + glutarate(in) = dehydroepiandrosterone 3-sulfate(in) + glutarate(out). Its function is as follows. Renal transmembrane organic anion/dicarboxylate exchanger that participates in the reabsorption of conjugated steroids, as well as bile acids, driven by an outward gradient of dicarboxylates such as glutarate or succinate. Transports estrone 3-sulfate and estradiol-17-glucuronide (17beta-estradiol 17-O-(beta-D-glucuronate)), but not androstanediol glucuronide (5alpha-androstane-3alpha,17beta-diol 3-O-(beta-D-glucuronate)), nor taurocholate. Prefers sulfate conjugates of steroids rather than glucuronide conjugates. This chain is Steroid transmembrane transporter SLC22A24, found in Rattus norvegicus (Rat).